The following is a 96-amino-acid chain: Large ribosomal subunit protein bL27 (96 aa).

Positions 12-33 (HKGGGSSANGRNSAGRRLGAKA) are disordered. Positions 19-28 (ANGRNSAGRR) are enriched in low complexity.

It belongs to the bacterial ribosomal protein bL27 family.

This is Large ribosomal subunit protein bL27 from Lactobacillus helveticus (strain DPC 4571).